The primary structure comprises 417 residues: Leucine-rich repeat-containing protein 42 (417 aa).

4 LRR repeats span residues 167–188 (CLRS…LEHL), 195–215 (SLTE…RKMT), 227–249 (ALKV…FLFG), and 252–273 (LLQF…VKKI). A disordered region spans residues 360 to 399 (FFRPEEQKDSDSSKSDKRQRSTKRTGADPGQEDCTIAPAT). A compositionally biased stretch (basic and acidic residues) spans 362–378 (RPEEQKDSDSSKSDKRQ).

This sequence belongs to the LRRC42 family.

The chain is Leucine-rich repeat-containing protein 42 (lrrc42) from Xenopus tropicalis (Western clawed frog).